We begin with the raw amino-acid sequence, 61 residues long: Double gene block protein 1 (61 aa).

A disordered region spans residues 1–45 (MDIESEVPVVGKQMLAGNRGKQKTRRSVAKDAIRKPASDSTNGGN). Positions 17-35 (GNRGKQKTRRSVAKDAIRK) are RNA-binding. Positions 28–37 (VAKDAIRKPA) are enriched in basic and acidic residues.

Belongs to the carmovirus double gene block protein 1 family. As to quaternary structure, homodimer.

Cell-to-cell movement. Displays RNA-binding activity. In Carnation mottle virus (CarMV), this protein is Double gene block protein 1.